A 132-amino-acid polypeptide reads, in one-letter code: Small ribosomal subunit protein uS8 (132 aa).

It belongs to the universal ribosomal protein uS8 family. Part of the 30S ribosomal subunit. Contacts proteins S5 and S12.

One of the primary rRNA binding proteins, it binds directly to 16S rRNA central domain where it helps coordinate assembly of the platform of the 30S subunit. In Levilactobacillus brevis (strain ATCC 367 / BCRC 12310 / CIP 105137 / JCM 1170 / LMG 11437 / NCIMB 947 / NCTC 947) (Lactobacillus brevis), this protein is Small ribosomal subunit protein uS8.